The primary structure comprises 879 residues: Phosphoenolpyruvate carboxylase (879 aa).

Active-site residues include His138 and Lys545.

This sequence belongs to the PEPCase type 1 family. Mg(2+) serves as cofactor.

The enzyme catalyses oxaloacetate + phosphate = phosphoenolpyruvate + hydrogencarbonate. Its function is as follows. Forms oxaloacetate, a four-carbon dicarboxylic acid source for the tricarboxylic acid cycle. In Haemophilus influenzae (strain 86-028NP), this protein is Phosphoenolpyruvate carboxylase.